The primary structure comprises 49 residues: Large ribosomal subunit protein bL33B (49 aa).

The protein belongs to the bacterial ribosomal protein bL33 family.

The polypeptide is Large ribosomal subunit protein bL33B (Bacillus velezensis (strain DSM 23117 / BGSC 10A6 / LMG 26770 / FZB42) (Bacillus amyloliquefaciens subsp. plantarum)).